Reading from the N-terminus, the 357-residue chain is Glucose-6-phosphatase catalytic subunit 1 (357 aa).

The Lumenal segment spans residues 1 to 28 (MEERMNVLHDFGIQSTRYLQVNYEDSQD). The helical transmembrane segment at 29–49 (WFVLVSVIADLRNAFYVLFPI) threads the bilayer. The Cytoplasmic segment spans residues 50 to 60 (WFHIQETVGIN). Residues 61–81 (LLWVAVVGDWFNLVFKWILFG) form a helical membrane-spanning segment. Residues 82–117 (QRPYWWVLDTDYYSNSSVPLIKQFPVTCETGPGSPS) lie on the Lumenal side of the membrane. Position 83 (Arg-83) interacts with substrate. An N-linked (GlcNAc...) asparagine glycan is attached at Asn-96. The chain crosses the membrane as a helical span at residues 118–138 (GHAMGTAGVYYVMVTSTLAIF). His-119 acts as the Proton donor in catalysis. The Cytoplasmic portion of the chain corresponds to 139–147 (RGKKKSTYG). A helical membrane pass occupies residues 148-168 (FRCLNVVLWLGYWAVQLNVCL). Topologically, residues 169 to 170 (SR) are lumenal. Arg-170 provides a ligand contact to substrate. A helical membrane pass occupies residues 171–191 (IYLAAHFPHQVVAGVLSGIAV). The Nucleophile role is filled by His-176. Over 192-211 (AETFSHIRGIYNASLQRYCL) the chain is Cytoplasmic. A helical membrane pass occupies residues 212–232 (ITFFLFGFALGFYLLLKGLGV). Residues 233–254 (DLLWTLEKAKRWCERPEWVHLD) are Lumenal-facing. A helical membrane pass occupies residues 255–275 (TTPFASLFKNLGTLLGLGLAL). Topologically, residues 276-291 (NSSMYRKSCKGELRKS) are cytoplasmic. A helical transmembrane segment spans residues 292–312 (LPFRLACIVASLGLLHLFDSL). Over 313-320 (KPPSQIES) the chain is Lumenal. Residues 321–341 (IFYILSFCKSATVPFASVSLI) traverse the membrane as a helical segment. The Cytoplasmic portion of the chain corresponds to 342–357 (PYCLARLLGQTHKKSL). Positions 354–357 (KKSL) match the Prevents secretion from ER motif.

It belongs to the glucose-6-phosphatase family.

It is found in the endoplasmic reticulum membrane. The catalysed reaction is D-glucose 6-phosphate + H2O = D-glucose + phosphate. The protein operates within carbohydrate biosynthesis; gluconeogenesis. Hydrolyzes glucose-6-phosphate to glucose in the endoplasmic reticulum. Forms with the glucose-6-phosphate transporter (SLC37A4/G6PT) the complex responsible for glucose production in the terminal step of glycogenolysis and gluconeogenesis. Hence, it is the key enzyme in homeostatic regulation of blood glucose levels. In Rattus norvegicus (Rat), this protein is Glucose-6-phosphatase catalytic subunit 1 (G6pc1).